The primary structure comprises 230 residues: Cytidylate kinase (230 aa).

Residue 16 to 24 (GPASAGKST) participates in ATP binding.

This sequence belongs to the cytidylate kinase family. Type 1 subfamily.

It is found in the cytoplasm. The catalysed reaction is CMP + ATP = CDP + ADP. The enzyme catalyses dCMP + ATP = dCDP + ADP. The sequence is that of Cytidylate kinase from Lactobacillus gasseri (strain ATCC 33323 / DSM 20243 / BCRC 14619 / CIP 102991 / JCM 1131 / KCTC 3163 / NCIMB 11718 / NCTC 13722 / AM63).